Here is a 748-residue protein sequence, read N- to C-terminus: Ribonucleoprotein PTB-binding 1 (748 aa).

The disordered stretch occupies residues 1 to 42 (MAADVSVTHRPPLSPEAEAEAETPETVDRRTPEQELPPLDPE). A2 is modified (N-acetylalanine). S6 and S14 each carry phosphoserine. Residue T31 is modified to Phosphothreonine. Residues 45-60 (RKRLEHTERQFRNRRK) carry the Nuclear localization signal motif. 3 RRM domains span residues 59–130 (RKIL…LQPT), 132–210 (ALLC…WTDA), and 221–299 (RCLC…FCAP). The interval 307–401 (LAALIAAQAT…QSQSQKKPGI (95 aa)) is interaction with PTBP1. Disordered stretches follow at residues 390-505 (QSQS…GEPP), 525-647 (SNLA…PLSH), and 672-731 (KAVG…QHSQ). Residue T469 is modified to Phosphothreonine. Phosphoserine occurs at positions 480, 576, 626, and 630. Residues 675-685 (GSSPMGSSEGL) show a composition bias toward low complexity. S716 and S720 each carry phosphoserine. Residues 743-746 (KRKR) carry the Nuclear localization signal motif.

Interacts with PTBP1, RAVER2, VCL and ACTN1. Part of a complex containing RAVER1, VCL and ACTN1. As to expression, ubiquitous. Detected in aorta, brain, gut, heart, kidney, liver, spleen, uterus and skeletal muscle.

Its subcellular location is the nucleus. It localises to the cytoplasm. Cooperates with PTBP1 to modulate regulated alternative splicing events. Promotes exon skipping. Cooperates with PTBP1 to modulate switching between mutually exclusive exons during maturation of the TPM1 pre-mRNA. The chain is Ribonucleoprotein PTB-binding 1 (Raver1) from Rattus norvegicus (Rat).